A 120-amino-acid chain; its full sequence is Large ribosomal subunit protein uL18 (120 aa).

As to quaternary structure, part of the 50S ribosomal subunit; part of the 5S rRNA/L5/L18/L25 subcomplex. Contacts the 5S and 23S rRNAs.

Its function is as follows. This is one of the proteins that bind and probably mediate the attachment of the 5S RNA into the large ribosomal subunit, where it forms part of the central protuberance. This is Large ribosomal subunit protein uL18 from Rhodopseudomonas palustris (strain ATCC BAA-98 / CGA009).